Consider the following 913-residue polypeptide: Eukaryotic translation initiation factor 3 subunit C (913 aa).

Residues 1-22 (MSRFFANGSDSESESSEEEVQA) are disordered. Over residues 11-20 (SESESSEEEV) the composition is skewed to acidic residues. Phosphoserine is present on residues S34, S165, S177, and S186. A disordered region spans residues 157–285 (FREAPDQESD…KRAEDDEDGE (129 aa)). Positions 162–171 (DQESDVEEGE) are enriched in acidic residues. Residues 172–184 (GEPHDSDGDRAGA) are compositionally biased toward basic and acidic residues. Residues 214-239 (DEDDSDDSIDWDSDTESETESSEDEN) show a composition bias toward acidic residues. Basic and acidic residues predominate over residues 244-263 (MRERFLKRTTEKEDKDDDKR). Residues 264–276 (KDKRKEQKHKVRK) show a composition bias toward basic residues. Residues 645–821 (FHMHINLELL…ETVVMHRSEP (177 aa)) enclose the PCI domain. Positions 856-913 (RGNMGNRDRGYNRNQNNQGGNWGGQRRDNRNQRNRNQRGHHKQQQQQQQQQVQTIEEE) are disordered. Residues 887 to 898 (QRNRNQRGHHKQ) show a composition bias toward basic residues.

The protein belongs to the eIF-3 subunit C family. As to quaternary structure, component of the eukaryotic translation initiation factor 3 (eIF-3) complex. The eIF-3 complex interacts with pix.

The protein localises to the cytoplasm. Its function is as follows. Component of the eukaryotic translation initiation factor 3 (eIF-3) complex, which is involved in protein synthesis of a specialized repertoire of mRNAs and, together with other initiation factors, stimulates binding of mRNA and methionyl-tRNAi to the 40S ribosome. The eIF-3 complex specifically targets and initiates translation of a subset of mRNAs involved in cell proliferation. The chain is Eukaryotic translation initiation factor 3 subunit C from Drosophila mojavensis (Fruit fly).